A 394-amino-acid polypeptide reads, in one-letter code: Obg-like ATPase 1 (394 aa).

One can recognise an OBG-type G domain in the interval 25–282; the sequence is LKIGIVGLPN…MPPDEAAKYC (258 aa). ATP-binding positions include 34–39, 56–60, and 94–97; these read NVGKST, FCTID, and DIAG. 2 residues coordinate Mg(2+): Ser38 and Thr58. Phe129 provides a ligand contact to GTP. Residues 230–231, Met231, and 263–265 contribute to the ATP site; these read NM and SCA. A GTP-binding site is contributed by 263–265; the sequence is SCA. One can recognise a TGS domain in the interval 303-386; it reads HLIYFFTAGP…QDADIIFFKF (84 aa).

The protein belongs to the TRAFAC class OBG-HflX-like GTPase superfamily. OBG GTPase family. YchF/OLA1 subfamily. Monomer (Potential). Interacts with GAP1. The cofactor is Mg(2+).

Its subcellular location is the cytoplasm. It is found in the cell membrane. It localises to the cytosol. With respect to regulation, activated by GAP1. In terms of biological role, hydrolyzes ATP, and can also hydrolyze GTP with lower efficiency. Has lower affinity for GTP (Potential). Exhibits GTPase activity. Exhibits similar binding affinities and hydrolytic activities toward both GTP and ATP. Binds to the 26 S ribosomal RNA in vitro, but not to the 5.8 S or 18 S rRNA. Confers sensitivity to salinity stress by suppressing the anti-oxidation enzymatic activities and increasing lipid peroxidation thus leading to the accumulation of reactive oxygen species (ROS). This is Obg-like ATPase 1 from Oryza sativa subsp. indica (Rice).